The primary structure comprises 338 residues: Phosphoribosylformylglycinamidine cyclo-ligase (338 aa).

It belongs to the AIR synthase family.

Its subcellular location is the cytoplasm. The enzyme catalyses 2-formamido-N(1)-(5-O-phospho-beta-D-ribosyl)acetamidine + ATP = 5-amino-1-(5-phospho-beta-D-ribosyl)imidazole + ADP + phosphate + H(+). It functions in the pathway purine metabolism; IMP biosynthesis via de novo pathway; 5-amino-1-(5-phospho-D-ribosyl)imidazole from N(2)-formyl-N(1)-(5-phospho-D-ribosyl)glycinamide: step 2/2. The chain is Phosphoribosylformylglycinamidine cyclo-ligase from Lactococcus lactis subsp. lactis (strain IL1403) (Streptococcus lactis).